The primary structure comprises 447 residues: Phosphoglucosamine mutase (447 aa).

Ser-103 (phosphoserine intermediate) is an active-site residue. Residues Ser-103, Asp-242, Asp-244, and Asp-246 each coordinate Mg(2+). At Ser-103 the chain carries Phosphoserine.

Belongs to the phosphohexose mutase family. Mg(2+) serves as cofactor. In terms of processing, activated by phosphorylation.

The enzyme catalyses alpha-D-glucosamine 1-phosphate = D-glucosamine 6-phosphate. In terms of biological role, catalyzes the conversion of glucosamine-6-phosphate to glucosamine-1-phosphate. This chain is Phosphoglucosamine mutase, found in Marinobacter nauticus (strain ATCC 700491 / DSM 11845 / VT8) (Marinobacter aquaeolei).